We begin with the raw amino-acid sequence, 340 residues long: Anthranilate phosphoribosyltransferase (340 aa).

Residues G83, 86 to 87 (GD), T91, 93 to 96 (NIST), 111 to 119 (KHGNRSITS), and S123 contribute to the 5-phospho-alpha-D-ribose 1-diphosphate site. G83 contributes to the anthranilate binding site. S95 serves as a coordination point for Mg(2+). An anthranilate-binding site is contributed by N114. Residue R169 coordinates anthranilate. D228 and E229 together coordinate Mg(2+).

It belongs to the anthranilate phosphoribosyltransferase family. As to quaternary structure, homodimer. Requires Mg(2+) as cofactor.

It catalyses the reaction N-(5-phospho-beta-D-ribosyl)anthranilate + diphosphate = 5-phospho-alpha-D-ribose 1-diphosphate + anthranilate. It participates in amino-acid biosynthesis; L-tryptophan biosynthesis; L-tryptophan from chorismate: step 2/5. Catalyzes the transfer of the phosphoribosyl group of 5-phosphorylribose-1-pyrophosphate (PRPP) to anthranilate to yield N-(5'-phosphoribosyl)-anthranilate (PRA). The sequence is that of Anthranilate phosphoribosyltransferase from Solibacter usitatus (strain Ellin6076).